We begin with the raw amino-acid sequence, 284 residues long: Tropomyosin (284 aa).

Positions 1-280 form a coiled coil; sequence MDAIKKKMQA…SDELDQTFAE (280 aa).

The protein belongs to the tropomyosin family. As to quaternary structure, homodimer.

Its function is as follows. Tropomyosin, in association with the troponin complex, plays a central role in the calcium dependent regulation of muscle contraction. This Sinonovacula constricta (Razor clam) protein is Tropomyosin.